Consider the following 404-residue polypeptide: Serpin-Z2B (404 aa).

The interval 349 to 373 is RCL; that stretch reads GTEAAAATACTMKFLCLTLTSPVDF.

This sequence belongs to the serpin family.

Probable serine protease inhibitor. This chain is Serpin-Z2B, found in Oryza sativa subsp. japonica (Rice).